The following is a 254-amino-acid chain: 3-deoxy-manno-octulosonate cytidylyltransferase (254 aa).

The protein belongs to the KdsB family.

It localises to the cytoplasm. The enzyme catalyses 3-deoxy-alpha-D-manno-oct-2-ulosonate + CTP = CMP-3-deoxy-beta-D-manno-octulosonate + diphosphate. Its pathway is nucleotide-sugar biosynthesis; CMP-3-deoxy-D-manno-octulosonate biosynthesis; CMP-3-deoxy-D-manno-octulosonate from 3-deoxy-D-manno-octulosonate and CTP: step 1/1. The protein operates within bacterial outer membrane biogenesis; lipopolysaccharide biosynthesis. In terms of biological role, activates KDO (a required 8-carbon sugar) for incorporation into bacterial lipopolysaccharide in Gram-negative bacteria. This Haemophilus influenzae (strain PittEE) protein is 3-deoxy-manno-octulosonate cytidylyltransferase.